Reading from the N-terminus, the 1374-residue chain is Probable multidrug resistance-associated protein lethal(2)03659 (1374 aa).

Positions 1-40 (MDKQPVLEPTFDSVSERENTSIEESSLLENNGFDHRNKDE) are disordered. 6 helical membrane-spanning segments follow: residues 159–179 (LLRV…VVEL), 205–225 (AGFY…MILT), 282–302 (YTVH…YLMY), 305–325 (IGIS…IQMY), 404–424 (IFLS…EIAF), and 426–446 (ITAY…SAII). Residues 168–449 (GFPGLAIFVV…YVPSAIIQTA (282 aa)) enclose the ABC transmembrane type-1 1 domain. The interval 466-492 (ELGSSDKSEGPSKDTVPGNPPSNNNEA) is disordered. The ABC transporter 1 domain maps to 499 to 722 (ISIRDLKAKW…GLITGLGSLS (224 aa)). 534-541 (GLTGSGKS) is a binding site for ATP. N561 carries an N-linked (GlcNAc...) asparagine glycan. The interval 723 to 766 (KTDKAKTEEQEPLNLNSPDNKNEVTPIKENSEQTVGGSSSGKEH) is disordered. Helical transmembrane passes span 787-807 (GGGL…QVAV), 845-865 (LIII…FNIA), 913-933 (VVLV…IVIA), 938-958 (LLLV…NLYL), and 1025-1045 (YCMN…FFAF). The 287-residue stretch at 793-1079 (FLVMLSSSVL…GVRQTAELEN (287 aa)) folds into the ABC transmembrane type-1 2 domain. The region spanning 1119–1352 (FKELNLRYTP…SDSKVFHNLV (234 aa)) is the ABC transporter 2 domain. 1153–1160 (GRTGAGKS) provides a ligand contact to ATP. N1254 and N1353 each carry an N-linked (GlcNAc...) asparagine glycan.

Belongs to the ABC transporter superfamily. ABCC family. Conjugate transporter (TC 3.A.1.208) subfamily. In terms of tissue distribution, uniform expression in embryos.

The protein resides in the membrane. Functionally, vital for development. The chain is Probable multidrug resistance-associated protein lethal(2)03659 (l(2)03659) from Drosophila melanogaster (Fruit fly).